Consider the following 900-residue polypeptide: E3 ubiquitin-protein ligase BRE1-like 2 (900 aa).

The interval 1–31 (MENQESDEPMQKKPHLLDSVSPNSMARNSSP) is disordered. Polar residues predominate over residues 20-31 (VSPNSMARNSSP). 4 coiled-coil regions span residues 63–96 (TVLQ…LQLN), 217–300 (EDAT…KDAA), 437–660 (SRIE…AEME), and 706–737 (SEKQ…EQMK). The segment at 848–887 (CGVCFDRPKEVVIVKCYHLFCQQCIQRSLEIRHRKCPGCG) adopts an RING-type zinc-finger fold.

Belongs to the BRE1 family. In terms of assembly, may act as a tetramer consisting of two copies of HUB1 and two copies of HUB2. Ubiquitously expressed.

The protein resides in the nucleus. It catalyses the reaction S-ubiquitinyl-[E2 ubiquitin-conjugating enzyme]-L-cysteine + [acceptor protein]-L-lysine = [E2 ubiquitin-conjugating enzyme]-L-cysteine + N(6)-ubiquitinyl-[acceptor protein]-L-lysine.. It participates in protein modification; protein ubiquitination. E3 ubiquitin-protein ligase that monoubiquitinates H2B to form H2BK143ub1. H2BK143ub1 gives a specific tag for epigenetic transcriptional activation and is also prerequisite for H3K4me and maybe H3K79me. It thereby plays a central role in histone code and gene regulation. Forms a ubiquitin ligase complex in cooperation with the E2 enzyme UBC2/RAD6. The sequence is that of E3 ubiquitin-protein ligase BRE1-like 2 (HUB2) from Arabidopsis thaliana (Mouse-ear cress).